A 317-amino-acid chain; its full sequence is 4-diphosphocytidyl-2-C-methyl-D-erythritol kinase (317 aa).

The active site involves lysine 11. Position 99 to 109 (99 to 109 (PVAAGLAGGST)) interacts with ATP. The active site involves aspartate 141.

It belongs to the GHMP kinase family. IspE subfamily.

It carries out the reaction 4-CDP-2-C-methyl-D-erythritol + ATP = 4-CDP-2-C-methyl-D-erythritol 2-phosphate + ADP + H(+). Its pathway is isoprenoid biosynthesis; isopentenyl diphosphate biosynthesis via DXP pathway; isopentenyl diphosphate from 1-deoxy-D-xylulose 5-phosphate: step 3/6. Catalyzes the phosphorylation of the position 2 hydroxy group of 4-diphosphocytidyl-2C-methyl-D-erythritol. The polypeptide is 4-diphosphocytidyl-2-C-methyl-D-erythritol kinase (Nostoc sp. (strain PCC 7120 / SAG 25.82 / UTEX 2576)).